A 322-amino-acid polypeptide reads, in one-letter code: 4-hydroxy-3-methylbut-2-enyl diphosphate reductase (322 aa).

Cysteine 15 is a binding site for [4Fe-4S] cluster. 2 residues coordinate (2E)-4-hydroxy-3-methylbut-2-enyl diphosphate: histidine 44 and histidine 77. Dimethylallyl diphosphate-binding residues include histidine 44 and histidine 77. 2 residues coordinate isopentenyl diphosphate: histidine 44 and histidine 77. Cysteine 99 lines the [4Fe-4S] cluster pocket. Histidine 127 is a (2E)-4-hydroxy-3-methylbut-2-enyl diphosphate binding site. Histidine 127 is a binding site for dimethylallyl diphosphate. Histidine 127 is a binding site for isopentenyl diphosphate. Glutamate 129 (proton donor) is an active-site residue. Threonine 168 contacts (2E)-4-hydroxy-3-methylbut-2-enyl diphosphate. Cysteine 198 lines the [4Fe-4S] cluster pocket. Serine 226, serine 227, asparagine 228, and serine 270 together coordinate (2E)-4-hydroxy-3-methylbut-2-enyl diphosphate. 4 residues coordinate dimethylallyl diphosphate: serine 226, serine 227, asparagine 228, and serine 270. Residues serine 226, serine 227, asparagine 228, and serine 270 each coordinate isopentenyl diphosphate.

This sequence belongs to the IspH family. [4Fe-4S] cluster serves as cofactor.

The enzyme catalyses isopentenyl diphosphate + 2 oxidized [2Fe-2S]-[ferredoxin] + H2O = (2E)-4-hydroxy-3-methylbut-2-enyl diphosphate + 2 reduced [2Fe-2S]-[ferredoxin] + 2 H(+). It catalyses the reaction dimethylallyl diphosphate + 2 oxidized [2Fe-2S]-[ferredoxin] + H2O = (2E)-4-hydroxy-3-methylbut-2-enyl diphosphate + 2 reduced [2Fe-2S]-[ferredoxin] + 2 H(+). Its pathway is isoprenoid biosynthesis; dimethylallyl diphosphate biosynthesis; dimethylallyl diphosphate from (2E)-4-hydroxy-3-methylbutenyl diphosphate: step 1/1. It participates in isoprenoid biosynthesis; isopentenyl diphosphate biosynthesis via DXP pathway; isopentenyl diphosphate from 1-deoxy-D-xylulose 5-phosphate: step 6/6. Catalyzes the conversion of 1-hydroxy-2-methyl-2-(E)-butenyl 4-diphosphate (HMBPP) into a mixture of isopentenyl diphosphate (IPP) and dimethylallyl diphosphate (DMAPP). Acts in the terminal step of the DOXP/MEP pathway for isoprenoid precursor biosynthesis. This is 4-hydroxy-3-methylbut-2-enyl diphosphate reductase from Neisseria gonorrhoeae (strain ATCC 700825 / FA 1090).